The sequence spans 220 residues: PKHD-type hydroxylase PCC7424_1929 (220 aa).

In terms of domain architecture, Fe2OG dioxygenase spans 77–173; that stretch reads KIHSLLFSRY…RLVAVGWVQS (97 aa). Residues His95, Asp97, and His154 each contribute to the Fe cation site. Position 164 (Arg164) interacts with 2-oxoglutarate.

Fe(2+) is required as a cofactor. It depends on L-ascorbate as a cofactor.

This Gloeothece citriformis (strain PCC 7424) (Cyanothece sp. (strain PCC 7424)) protein is PKHD-type hydroxylase PCC7424_1929.